The primary structure comprises 349 residues: Divinyl chlorophyll a/b light-harvesting protein PcbA (349 aa).

6 helical membrane passes run 27–47 (FIAA…AFTL), 57–77 (VPMG…GIGF), 89–109 (VVAV…GGLM), 202–222 (VMGG…FHIA), 242–262 (AILS…AFWS), and 304–324 (LANV…WHAL).

The protein belongs to the PsbB/PsbC family. IsiA/Pcb subfamily. As to quaternary structure, the antenna complex consists of divinyl chlorophylls (a and b) and divinyl chlorophyll a/b binding proteins and binds more divinyl chlorophyll b than does the antenna complex from high-light-adapted Prochlorococcus. Divinyl chlorophyll a serves as cofactor. The cofactor is divinyl chlorophyll b.

It localises to the cellular thylakoid membrane. In terms of biological role, the antenna complex functions as a light receptor, it captures and delivers excitation energy to photosystems II and I. The Prochlorales pcb genes are not related to higher plant LHCs. The chain is Divinyl chlorophyll a/b light-harvesting protein PcbA (pcbA) from Prochlorococcus marinus (strain NATL2A).